A 338-amino-acid chain; its full sequence is Probable tRNA pseudouridine synthase B (338 aa).

Asp-82 acts as the Nucleophile in catalysis. The region spanning 250–325 (LPKVWIRDSA…IAVDVDKVFM (76 aa)) is the PUA domain.

This sequence belongs to the pseudouridine synthase TruB family. Type 2 subfamily.

It carries out the reaction uridine(55) in tRNA = pseudouridine(55) in tRNA. Functionally, could be responsible for synthesis of pseudouridine from uracil-55 in the psi GC loop of transfer RNAs. This Thermococcus kodakarensis (strain ATCC BAA-918 / JCM 12380 / KOD1) (Pyrococcus kodakaraensis (strain KOD1)) protein is Probable tRNA pseudouridine synthase B.